The following is a 467-amino-acid chain: Light-independent protochlorophyllide reductase subunit N (467 aa).

[4Fe-4S] cluster-binding residues include Cys22, Cys47, and Cys107.

The protein belongs to the BchN/ChlN family. As to quaternary structure, protochlorophyllide reductase is composed of three subunits; ChlL, ChlN and ChlB. Forms a heterotetramer of two ChlB and two ChlN subunits. The cofactor is [4Fe-4S] cluster.

It localises to the plastid. The protein localises to the chloroplast. It carries out the reaction chlorophyllide a + oxidized 2[4Fe-4S]-[ferredoxin] + 2 ADP + 2 phosphate = protochlorophyllide a + reduced 2[4Fe-4S]-[ferredoxin] + 2 ATP + 2 H2O. It participates in porphyrin-containing compound metabolism; chlorophyll biosynthesis (light-independent). In terms of biological role, component of the dark-operative protochlorophyllide reductase (DPOR) that uses Mg-ATP and reduced ferredoxin to reduce ring D of protochlorophyllide (Pchlide) to form chlorophyllide a (Chlide). This reaction is light-independent. The NB-protein (ChlN-ChlB) is the catalytic component of the complex. The chain is Light-independent protochlorophyllide reductase subunit N from Pinus thunbergii (Japanese black pine).